The chain runs to 534 residues: Inorganic phosphate transporter 1-4 (534 aa).

The Cytoplasmic portion of the chain corresponds to methionine 1–alanine 24. A helical transmembrane segment spans residues isoleucine 25–valine 45. Residues threonine 46–alanine 70 lie on the Extracellular side of the membrane. A helical transmembrane segment spans residues alanine 71 to leucine 91. Residues glycine 92–lysine 99 lie on the Cytoplasmic side of the membrane. Residues valine 100–glycine 120 form a helical membrane-spanning segment. The Extracellular portion of the chain corresponds to histidine 121 to cysteine 131. Residues phenylalanine 132–methionine 152 form a helical membrane-spanning segment. Residues serine 153–arginine 161 lie on the Cytoplasmic side of the membrane. Residues glycine 162–phenylalanine 182 form a helical membrane-spanning segment. Residues alanine 183–alanine 211 lie on the Extracellular side of the membrane. Residues aspartate 212–serine 232 form a helical membrane-spanning segment. At arginine 233–arginine 293 the chain is on the cytoplasmic side. Residues histidine 294–serine 314 traverse the membrane as a helical segment. The Extracellular portion of the chain corresponds to glutamine 315–threonine 349. The helical transmembrane segment at leucine 350–isoleucine 370 threads the bilayer. The Cytoplasmic segment spans residues glycine 371–arginine 372. The chain crosses the membrane as a helical span at residues phenylalanine 373–proline 393. Topologically, residues tyrosine 394–arginine 403 are extracellular. A helical membrane pass occupies residues isoleucine 404–threonine 424. The Cytoplasmic portion of the chain corresponds to threonine 425–histidine 442. A helical transmembrane segment spans residues glycine 443–leucine 463. Residues alanine 464–asparagine 484 lie on the Extracellular side of the membrane. The chain crosses the membrane as a helical span at residues serine 485 to glutamate 505. Topologically, residues serine 506 to valine 534 are cytoplasmic. Residues glutamate 512–valine 534 form a disordered region. A phosphoserine mark is found at serine 524 and serine 528.

It belongs to the major facilitator superfamily. Phosphate:H(+) symporter (TC 2.A.1.9) family. Interacts with NLA. In terms of processing, ubiquitinated by NLA. Ubiquitination of PHT1-4 leads to its degradation by the proteasome. Mostly expressed in roots, in tissues connecting the lateral roots to the primary root. Also present in flowers, in senescing anther filaments and in the abscission zone at the base of siliques. Expressed in hydathodes and axillary buds, and in some senescing leaves. After Pi starvation, localized in all cells of undifferentiated root segments, including root tips and root hairs, and in the epidermis, cortex and stellar regions of mature root segments.

It localises to the cell membrane. In terms of biological role, high-affinity transporter for external inorganic phosphate. Acts as a H(+):phosphate symporter in both low- and high-Pi conditions. Confers sensitivity to arsenate. The polypeptide is Inorganic phosphate transporter 1-4 (PHT1-4) (Arabidopsis thaliana (Mouse-ear cress)).